A 548-amino-acid polypeptide reads, in one-letter code: Probable 2,3-bisphosphoglycerate-independent phosphoglycerate mutase (548 aa).

Mn(2+) is bound by residues aspartate 20 and serine 73. Catalysis depends on serine 73, which acts as the Phosphoserine intermediate. Substrate contacts are provided by residues histidine 134, 164–165 (RD), arginine 200, arginine 207, 279–282 (RGDR), and lysine 354. Mn(2+)-binding residues include aspartate 422, histidine 426, aspartate 463, histidine 464, and histidine 493.

This sequence belongs to the BPG-independent phosphoglycerate mutase family. As to quaternary structure, monomer. Mn(2+) is required as a cofactor.

The catalysed reaction is (2R)-2-phosphoglycerate = (2R)-3-phosphoglycerate. It participates in carbohydrate degradation; glycolysis; pyruvate from D-glyceraldehyde 3-phosphate: step 3/5. Its function is as follows. Catalyzes the interconversion of 2-phosphoglycerate and 3-phosphoglycerate. This chain is Probable 2,3-bisphosphoglycerate-independent phosphoglycerate mutase (gpmI), found in Leptospira interrogans serogroup Icterohaemorrhagiae serovar copenhageni (strain Fiocruz L1-130).